A 400-amino-acid chain; its full sequence is Large envelope protein (400 aa).

The residue at position 1 (Met1) is an N-acetylmethionine. Gly2 carries N-myristoyl glycine; by host lipidation. Residues 2–119 form a pre-S1 region; it reads GAPLSTTRRG…PPLRDTHPQA (118 aa). Residues 2–174 form a pre-S region; sequence GAPLSTTRRG…FSKTGGPAMN (173 aa). Over 2–181 the chain is Virion surface; in external conformation; sequence GAPLSTTRRG…AMNMDNITSG (180 aa). Over 2-253 the chain is Intravirion; in internal conformation; sequence GAPLSTTRRG…PGYRWMCLRR (252 aa). A glycan (N-linked (GlcNAc...) asparagine) is linked at Pro4. Positions 84–117 are disordered; sequence VLTTLPADPPPASTNRRSGRKPTPVSPPLRDTHP. The tract at residues 120–174 is pre-S2; that stretch reads MQWNSTQFHQALLDPRVRALYFPAGGSSSGTQNPAPTIASLTSSIFSKTGGPAMN. The chain crosses the membrane as a helical span at residues 182–202; it reads LLGPLLVLQAVCFLLTKILTI. The Intravirion; in external conformation segment spans residues 203–253; the sequence is PQSLDSWWTSLNFLGGLPGCPGQNSQSPTSNHLPTSCPPTCPGYRWMCLRR. A helical membrane pass occupies residues 254 to 274; the sequence is FIIFLFILLLCLIFLLVLLDY. The Virion surface segment spans residues 275 to 348; that stretch reads QGMLPVCPLL…WASARFSWLS (74 aa). The N-linked (GlcNAc...) asparagine; by host glycan is linked to Asn320. A helical membrane pass occupies residues 349–369; it reads LLVQFVQWCVGLSPTVWLLVI. The Intravirion segment spans residues 370–375; that stretch reads WMIWYW. Residues 376 to 398 traverse the membrane as a helical segment; sequence GPNLCSILSPFIPLLPIFCYLWV. Residues 399 to 400 lie on the Virion surface side of the membrane; sequence SI.

This sequence belongs to the orthohepadnavirus major surface antigen family. In terms of assembly, in its internal form (Li-HBsAg), interacts with the capsid protein and with the isoform S. Interacts with host chaperone CANX. As to quaternary structure, associates with host chaperone CANX through its pre-S2 N glycan; this association may be essential for isoform M proper secretion. Interacts with isoform L. Interacts with the antigens of satellite virus HDV (HDVAgs); this interaction is required for encapsidation of HDV genomic RNA. Post-translationally, isoform M is N-terminally acetylated by host at a ratio of 90%, and N-glycosylated by host at the pre-S2 region. In terms of processing, myristoylated.

It localises to the virion membrane. The large envelope protein exists in two topological conformations, one which is termed 'external' or Le-HBsAg and the other 'internal' or Li-HBsAg. In its external conformation the protein attaches the virus to cell receptors and thereby initiating infection. This interaction determines the species specificity and liver tropism. This attachment induces virion internalization predominantly through caveolin-mediated endocytosis. The large envelope protein also assures fusion between virion membrane and endosomal membrane. In its internal conformation the protein plays a role in virion morphogenesis and mediates the contact with the nucleocapsid like a matrix protein. In terms of biological role, the middle envelope protein plays an important role in the budding of the virion. It is involved in the induction of budding in a nucleocapsid independent way. In this process the majority of envelope proteins bud to form subviral lipoprotein particles of 22 nm of diameter that do not contain a nucleocapsid. The polypeptide is Large envelope protein (Hepatitis B virus genotype F2 (isolate Brazil/w4B) (HBV-F)).